Consider the following 424-residue polypeptide: Probable biofilm formation methyltransferase WspC (424 aa).

The CheR-type methyltransferase domain occupies 1-263; that stretch reads MNEQRFFRFL…IAQSFAYVRH (263 aa). Residues Thr68, Arg72, Glu109, Asp133, 187–188, and 206–207 each bind S-adenosyl-L-methionine; these read NV and RN. A TPR repeat occupies 355–388; it reads AQVYYWLGLLSDTEGDAQQALSHYRKALYLEPQH.

As to quaternary structure, monomer. The TPR repeat does not mediate self-association.

Functionally, involved in biofilm formation. This chain is Probable biofilm formation methyltransferase WspC (wspC), found in Pseudomonas putida (strain ATCC 47054 / DSM 6125 / CFBP 8728 / NCIMB 11950 / KT2440).